The following is a 272-amino-acid chain: Exosome complex component MTR3 (272 aa).

The segment at 1 to 36 is disordered; sequence MPGDHRRIRGPEESQPPQLYAADEEEAPGTRDPTRL.

This sequence belongs to the RNase PH family. In terms of assembly, component of the RNA exosome core complex (Exo-9), composed of EXOSC1, EXOSC2, EXOSC3, EXOSC4, EXOSC5, EXOSC6, EXOSC7, EXOSC8 and EXOSC9; within the complex interacts with EXOSC1, EXOSC7 and EXOSC8. The catalytically inactive Exo-9 may associate with the catalytic subunit EXOSC10/RRP6. Exo-9 may associate with DIS3 to form the nucleolar exosome complex, or DIS3L to form the cytoplasmic exosome complex. Exo-9 is formed by a hexameric base ring consisting of the heterodimers EXOSC4-EXOSC9, EXOSC5-EXOSC8 and EXOSC6-EXOSC7, and a cap ring consisting of EXOSC1, EXOSC2 and EXOSC3. The RNA exosome complex associates with cofactors EXOSC10/RRP6, C1D/RRP47, MPHOSPH6/MPP6 and MTREX/MTR4.

The protein localises to the cytoplasm. It localises to the nucleus. The protein resides in the nucleolus. Its function is as follows. Non-catalytic component of the RNA exosome complex which has 3'-&gt;5' exoribonuclease activity and participates in a multitude of cellular RNA processing and degradation events. In the nucleus, the RNA exosome complex is involved in proper maturation of stable RNA species such as rRNA, snRNA and snoRNA, in the elimination of RNA processing by-products and non-coding 'pervasive' transcripts, such as antisense RNA species and promoter-upstream transcripts (PROMPTs), and of mRNAs with processing defects, thereby limiting or excluding their export to the cytoplasm. The RNA exosome may be involved in Ig class switch recombination (CSR) and/or Ig variable region somatic hypermutation (SHM) by targeting AICDA deamination activity to transcribed dsDNA substrates. In the cytoplasm, the RNA exosome complex is involved in general mRNA turnover and specifically degrades inherently unstable mRNAs containing AU-rich elements (AREs) within their 3' untranslated regions, and in RNA surveillance pathways, preventing translation of aberrant mRNAs. It seems to be involved in degradation of histone mRNA. The catalytic inactive RNA exosome core complex of 9 subunits (Exo-9) is proposed to play a pivotal role in the binding and presentation of RNA for ribonucleolysis, and to serve as a scaffold for the association with catalytic subunits and accessory proteins or complexes. This is Exosome complex component MTR3 (EXOSC6) from Homo sapiens (Human).